Reading from the N-terminus, the 451-residue chain is Aspartate aminotransferase, mitochondrial (451 aa).

L-aspartate contacts are provided by glycine 52, tryptophan 155, and asparagine 216. At lysine 286 the chain carries N6-(pyridoxal phosphate)lysine. Arginine 423 is an L-aspartate binding site.

Belongs to the class-I pyridoxal-phosphate-dependent aminotransferase family. As to quaternary structure, homodimer. Pyridoxal 5'-phosphate serves as cofactor.

Its subcellular location is the mitochondrion matrix. It carries out the reaction L-aspartate + 2-oxoglutarate = oxaloacetate + L-glutamate. Plays a key role in amino acid metabolism. Important for metabolite exchange between mitochondria and cytosol. The protein is Aspartate aminotransferase, mitochondrial (AAT1) of Saccharomyces cerevisiae (strain ATCC 204508 / S288c) (Baker's yeast).